The sequence spans 333 residues: N-acetyl-gamma-glutamyl-phosphate reductase (333 aa).

The active site involves Cys145.

This sequence belongs to the NAGSA dehydrogenase family. Type 1 subfamily.

The protein localises to the cytoplasm. It carries out the reaction N-acetyl-L-glutamate 5-semialdehyde + phosphate + NADP(+) = N-acetyl-L-glutamyl 5-phosphate + NADPH + H(+). It participates in amino-acid biosynthesis; L-arginine biosynthesis; N(2)-acetyl-L-ornithine from L-glutamate: step 3/4. Functionally, catalyzes the NADPH-dependent reduction of N-acetyl-5-glutamyl phosphate to yield N-acetyl-L-glutamate 5-semialdehyde. The chain is N-acetyl-gamma-glutamyl-phosphate reductase from Salinispora arenicola (strain CNS-205).